Reading from the N-terminus, the 1822-residue chain is Sperm flagellar protein 2 (1822 aa).

A Calponin-homology (CH) domain is found at 1-105 (MSEILCQWLN…LLYQLYIALQ (105 aa)). Coiled coils occupy residues 227 to 260 (KALEAQKMMKKKKEAEDVADEIKKFEALIKKDLQ), 321 to 396 (AHEA…KQAK), 732 to 758 (NQAQLLEEALTGCNRNLTEVERKKAQK), and 871 to 909 (CEKVKEILTTEIAKKKNKVEKKLEEKEAEKKAAASLAEL). Disordered regions lie at residues 896–1004 (KEAE…VPQP), 1278–1327 (EEEK…EATP), 1664–1718 (SIPS…NNEK), and 1803–1822 (EHVQGSDGERSPSRHTEEKK). The segment covering 911 to 920 (LPTPPPAPPP) has biased composition (pro residues). Composition is skewed to basic and acidic residues over residues 921–930 (EPEKEKEIHQ) and 949–968 (PHGKQESLQEGKGKKGETAL). Residues 975-987 (KGKSSGGKVPVKK) show a composition bias toward low complexity. 2 stretches are compositionally biased toward basic and acidic residues: residues 1278-1292 (EEEKENQPADPKEKS) and 1303-1314 (KEPPKKKQEDKK). The interval 1324–1676 (EATPVIVTTE…SAEKTSSTDA (353 aa)) is interaction with IFT20. The stretch at 1686–1712 (EENAAREERKLKDDTEKREQKDEEIPE) forms a coiled coil. The span at 1688–1708 (NAAREERKLKDDTEKREQKDE) shows a compositional bias: basic and acidic residues.

Interacts (via C-terminus) with IFT20. Interacts with DYNC1I2.

The protein localises to the cell projection. It localises to the cilium. Its subcellular location is the flagellum. It is found in the cytoplasm. The protein resides in the golgi apparatus. Its function is as follows. Required for correct axoneme development in spermatozoa. Important for normal development of the manchette and sperm head morphology. Essential for male fertility. Plays a role in localization of the intraflagellar transport protein IFT20 to the manchette, suggesting function as an adapter for dynein-mediated protein transport during spermatogenesis. Also plays a role in bone growth where it seems to be required for normal osteoblast differentiation. This Homo sapiens (Human) protein is Sperm flagellar protein 2 (SPEF2).